A 373-amino-acid polypeptide reads, in one-letter code: Spore germination protein KB (373 aa).

The next 10 membrane-spanning stretches (helical) occupy residues 11–31, 37–57, 78–98, 105–125, 143–163, 185–205, 219–239, 269–289, 306–326, and 338–358; these read LFVMIIIFELGSSLLITPGSM, WIAVLLGCAIGLFLFYLYQGI, LSWLFSFLYILYFAYIAARVL, LLTFAYHDTPIIIVNALLMVV, LLFGAMYLLGAIGLVLIIVSG, VFTQTMYVPFGEVVLFVMIFP, IAMAISGLIVALTVAINISVL, VFFMLALIIGGFFKVSLYLYA, LAYPMGLGILILSITIATNFS, and LYIHLPFQLLFPLFLFIVAVW.

The protein belongs to the amino acid-polyamine-organocation (APC) superfamily. Spore germination protein (SGP) (TC 2.A.3.9) family.

The protein localises to the cell membrane. Functionally, involved in the germination response to the combination of glucose, fructose, L-asparagine, and KCl. The chain is Spore germination protein KB (gerKB) from Bacillus subtilis (strain 168).